The sequence spans 527 residues: Tyrosine--tRNA ligase, cytoplasmic (527 aa).

Y39 lines the L-tyrosine pocket. The short motif at 44 to 52 is the 'HIGH' region element; the sequence is TTGKPHVAY. L-tyrosine contacts are provided by Y166, Q170, D173, and Q188. Positions 222 to 226 match the 'KMSKS' region motif; sequence KMSSS. The Nuclear localization signal signature appears at 242–247; that stretch reads KKKLKK. A disordered region spans residues 337–362; the sequence is TNAAYPNPSKAKPAEKGTKNSEPETI. Over residues 348-358 the composition is skewed to basic and acidic residues; that stretch reads KPAEKGTKNSE. Residues 363 to 467 enclose the tRNA-binding domain; sequence VPSRLDIRVG…AECCAGERVY (105 aa).

Belongs to the class-I aminoacyl-tRNA synthetase family. In terms of assembly, homodimer.

It localises to the cytoplasm. It is found in the nucleus. It carries out the reaction tRNA(Tyr) + L-tyrosine + ATP = L-tyrosyl-tRNA(Tyr) + AMP + diphosphate + H(+). In terms of biological role, catalyzes the attachment of tyrosine to tRNA(Tyr) in a two-step reaction: tyrosine is first activated by ATP to form Tyr-AMP and then transferred to the acceptor end of tRNA(Tyr). This is Tyrosine--tRNA ligase, cytoplasmic (YARS1) from Gallus gallus (Chicken).